A 211-amino-acid polypeptide reads, in one-letter code: Proteasome subunit beta (211 aa).

The propeptide at 1-8 (MNQTLETG) is removed in mature form; by autocatalysis. Residue T9 is the Nucleophile of the active site.

It belongs to the peptidase T1B family. In terms of assembly, the 20S proteasome core is composed of 14 alpha and 14 beta subunits that assemble into four stacked heptameric rings, resulting in a barrel-shaped structure. The two inner rings, each composed of seven catalytic beta subunits, are sandwiched by two outer rings, each composed of seven alpha subunits. The catalytic chamber with the active sites is on the inside of the barrel. Has a gated structure, the ends of the cylinder being occluded by the N-termini of the alpha-subunits. Is capped at one or both ends by the proteasome regulatory ATPase, PAN.

The protein resides in the cytoplasm. It carries out the reaction Cleavage of peptide bonds with very broad specificity.. The formation of the proteasomal ATPase PAN-20S proteasome complex, via the docking of the C-termini of PAN into the intersubunit pockets in the alpha-rings, triggers opening of the gate for substrate entry. Interconversion between the open-gate and close-gate conformations leads to a dynamic regulation of the 20S proteasome proteolysis activity. Functionally, component of the proteasome core, a large protease complex with broad specificity involved in protein degradation. The T.acidophilum proteasome is able to cleave oligopeptides after Tyr, Leu, Phe, and to a lesser extent after Glu and Arg. Thus, displays chymotrypsin-like activity and low level of caspase-like and trypsin-like activities. The chain is Proteasome subunit beta from Thermoplasma acidophilum (strain ATCC 25905 / DSM 1728 / JCM 9062 / NBRC 15155 / AMRC-C165).